A 331-amino-acid polypeptide reads, in one-letter code: Ribosomal RNA small subunit methyltransferase H (331 aa).

Residues 38-40 (GGY), aspartate 56, phenylalanine 83, aspartate 100, and glutamine 107 each bind S-adenosyl-L-methionine. Positions 287 to 331 (DEAELAENPRARSARLRVGVRTDAPAGKVDPQALGTPLIPKKGRR) are disordered.

Belongs to the methyltransferase superfamily. RsmH family.

Its subcellular location is the cytoplasm. The catalysed reaction is cytidine(1402) in 16S rRNA + S-adenosyl-L-methionine = N(4)-methylcytidine(1402) in 16S rRNA + S-adenosyl-L-homocysteine + H(+). Functionally, specifically methylates the N4 position of cytidine in position 1402 (C1402) of 16S rRNA. The chain is Ribosomal RNA small subunit methyltransferase H from Cereibacter sphaeroides (strain ATCC 17023 / DSM 158 / JCM 6121 / CCUG 31486 / LMG 2827 / NBRC 12203 / NCIMB 8253 / ATH 2.4.1.) (Rhodobacter sphaeroides).